The chain runs to 952 residues: MATPSMMPQWSYMHISGQDASEYLSPGLVQFARATETYFSLNNKFRNPTVAPTHDVTTDRSQRLTLRFIPVDREDTAYSYKARFTLAVGDNRVLDMASTYFDIRGVLDRGPTFKPYSGTAYNALAPKGAPNPCEWDEAATALEINLEEEDDDNEDEVDEQAEQQKTHVFGQAPYSGINITKEGIQIGVEGQTPKYADKTFQPEPQIGESQWYETEINHAAGRVLKKTTPMKPCYGSYAKPTNENGGQGILVKQQNGKLESQVEMQFFSTTEATAGNGDNLTPKVVLYSEDVDIETPDTHISYMPTIKEGNSRELMGQQSMPNRPNYIAFRDNFIGLMYYNSTGNMGVLAGQASQLNAVVDLQDRNTELSYQLLLDSIGDRTRYFSMWNQAVDSYDPDVRIIENHGTEDELPNYCFPLGGVINTETLTKVKPKTGQENGWEKDATEFSDKNEIRVGNNFAMEINLNANLWRNFLYSNIALYLPDKLKYSPSNVKISDNPNTYDYMNKRVVAPGLVDCYINLGARWSLDYMDNVNPFNHHRNAGLRYRSMLLGNGRYVPFHIQVPQKFFAIKNLLLLPGSYTYEWNFRKDVNMVLQSSLGNDLRVDGASIKFDSICLYATFFPMAHNTASTLEAMLRNDTNDQSFNDYLSAANMLYPIPANATNVPISIPSRNWAAFRGWAFTRLKTKETPSLGSGYDPYYTYSGSIPYLDGTFYLNHTFKKVAITFDSSVSWPGNDRLLTPNEFEIKRSVDGEGYNVAQCNMTKDWFLVQMLANYNIGYQGFYIPESYKDRMYSFFRNFQPMSRQVVDDTKYKDYQQVGILHQHNNSGFVGYLAPTMREGQAYPANFPYPLIGKTAVDSITQKKFLCDRTLWRIPFSSNFMSMGALTDLGQNLLYANSAHALDMTFEVDPMDEPTLLYVLFEVFDVVRVHRPHRGVIETVYLRTPFSAGNATT.

A2 carries the post-translational modification N-acetylalanine; by host. Acidic residues predominate over residues 149 to 161 (EDDDNEDEVDEQA). Residues 149–172 (EDDDNEDEVDEQAEQQKTHVFGQA) are disordered. Position 175 is a phosphoserine; by host (S175). Y940 bears the Phosphotyrosine; by host mark.

This sequence belongs to the adenoviridae hexon protein family. Homotrimer. Interacts with the capsid vertex protein; this interaction binds the peripentonal hexons to the neighboring penton base. Interacts with the hexon-linking protein; this interaction tethers the hexons surrounding the penton to those situated in the central plate of the facet. Interacts with the hexon-interlacing protein; this interaction lashes the hexons together. Interacts with host dyneins DYNC1LI1 and DYNC1I2; this interaction might be involved in intracellular microtubule-dependent transport of incoming viral capsid. Interacts with the shutoff protein; this interaction allows folding and formation of hexons trimers. Interacts with pre-protein VI; this interaction probably allows nuclear import of hexon trimers and possibly pre-capsid assembly. Interacts with host NUP214 (via N-terminus); this interaction might be essential for the release of the virus genome to the nucleus.

Its subcellular location is the virion. The protein resides in the host nucleus. Functionally, major capsid protein that self-associates to form 240 hexon trimers, each in the shape of a hexagon, building most of the pseudo T=25 capsid. Assembled into trimeric units with the help of the chaperone shutoff protein. Transported by pre-protein VI to the nucleus where it associates with other structural proteins to form an empty capsid. Might be involved, through its interaction with host dyneins, in the intracellular microtubule-dependent transport of incoming viral capsid to the nucleus. This chain is Hexon protein, found in Homo sapiens (Human).